Here is a 602-residue protein sequence, read N- to C-terminus: MDNRVSGTTSNGETKPVCPVMEKVEEDGTLEREQWTNKMEFVLSVAGEIIGLGNVWRFPYLCYKNGGGAFFIPYLIFLFTCGIPVFFLETALGQYTNQGGITAWRKICPIFEGIGYASQMIVSLLNVYYIVVLAWALFYLFSSFTTDLPWGSCSHEWNTENCVEFQKTNNSLNVTSENATSPVIEFWERRVLKISDGIQHLGSLRWELVLCLLLAWIICYFCIWKGVKSTGKVVYFTATFPYLMLVVLLIRGVTLPGAAQGIQFYLYPNITRLWDPQVWMDAGTQIFFSFAICLGCLTALGSYNKYHNNCYRDCVALCILNSSTSFVAGFAIFSILGFMSQEQGVPISEVAESGPGLAFIAYPRAVVMLPFSPLWACCFFFMVVLLGLDSQFVCVESLVTALVDMYPRVFRKKNRREILILIVSVVSFFIGLIMLTEGGMYVFQLFDYYAASGMCLLFVAIFESLCVAWVYGASRFYDNIEDMIGYKPWPLIKYCWLFFTPAVCLATFLFSLIKYTPLTYNKKYTYPWWGDALGWLLALSSMVCIPAWSIYKLRTLKGPLRERLRQLVCPAEDLPQKSQPELTSPATPMTSLLRLTELESNC.

At 1-40 (MDNRVSGTTSNGETKPVCPVMEKVEEDGTLEREQWTNKME) the chain is on the cytoplasmic side. Helical transmembrane passes span 41-61 (FVLS…FPYL), 68-88 (GAFF…VFFL), and 121-141 (IVSL…FYLF). Residues 142–206 (SSFTTDLPWG…GIQHLGSLRW (65 aa)) are Extracellular-facing. A disulfide bond links C153 and C162. N-linked (GlcNAc...) asparagine glycosylation is found at N169, N173, and N178. A run of 2 helical transmembrane segments spans residues 207-227 (ELVL…WKGV) and 233-253 (VVYF…IRGV). N-linked (GlcNAc...) asparagine glycosylation is present at N269. 7 consecutive transmembrane segments (helical) span residues 282–302 (AGTQ…ALGS), 319–339 (ILNS…LGFM), 366–386 (VVML…VVLL), 418–438 (ILIL…LTEG), 453–473 (GMCL…VYGA), 490–510 (PLIK…TFLF), and 528–548 (WWGD…IPAW). Residues 549–602 (SIYKLRTLKGPLRERLRQLVCPAEDLPQKSQPELTSPATPMTSLLRLTELESNC) are Cytoplasmic-facing. Position 587 is a phosphothreonine (T587). Position 591 is a phosphoserine (S591).

This sequence belongs to the sodium:neurotransmitter symporter (SNF) (TC 2.A.22) family. SLC6A13 subfamily. As to expression, brain, retina, and peripheral tissues. Expressed in hepatocytes (at protein level).

The protein resides in the cell membrane. It is found in the basolateral cell membrane. The enzyme catalyses 4-aminobutanoate(out) + chloride(out) + 2 Na(+)(out) = 4-aminobutanoate(in) + chloride(in) + 2 Na(+)(in). It catalyses the reaction taurine(out) + chloride(out) + 2 Na(+)(out) = taurine(in) + chloride(in) + 2 Na(+)(in). It carries out the reaction beta-alanine(out) + chloride(out) + 2 Na(+)(out) = beta-alanine(in) + chloride(in) + 2 Na(+)(in). The catalysed reaction is hypotaurine(out) + chloride(out) + 2 Na(+)(out) = hypotaurine(in) + chloride(in) + 2 Na(+)(in). With respect to regulation, GABA transport is inhibited by beta-alanine, L-2,4-Diaminobutyric acid, hypotaurine and nipecotic acid. Taurine transport is inhibited by hypotaurine, beta-alanine and nipecotic acid. Functionally, mediates sodium- and chloride-dependent transport of gamma-aminobutyric acid (GABA). Mediates transport of taurine and is the major taurine transporter in hepatocytes. Can also mediate transport of beta-alanine and hypotaurine. The sequence is that of Sodium- and chloride-dependent GABA transporter 2 (Slc6a13) from Rattus norvegicus (Rat).